The primary structure comprises 423 residues: Imidazolonepropionase (423 aa).

Fe(3+)-binding residues include H78 and H80. H78 and H80 together coordinate Zn(2+). The 4-imidazolone-5-propanoate site is built by R87, Y150, and H183. Y150 contributes to the N-formimidoyl-L-glutamate binding site. A Fe(3+)-binding site is contributed by H247. A Zn(2+)-binding site is contributed by H247. 4-imidazolone-5-propanoate is bound at residue E250. D322 provides a ligand contact to Fe(3+). D322 provides a ligand contact to Zn(2+). Residues N324 and G326 each contribute to the N-formimidoyl-L-glutamate site. Residue S327 participates in 4-imidazolone-5-propanoate binding.

This sequence belongs to the metallo-dependent hydrolases superfamily. HutI family. Requires Zn(2+) as cofactor. Fe(3+) serves as cofactor.

The protein resides in the cytoplasm. It catalyses the reaction 4-imidazolone-5-propanoate + H2O = N-formimidoyl-L-glutamate. It participates in amino-acid degradation; L-histidine degradation into L-glutamate; N-formimidoyl-L-glutamate from L-histidine: step 3/3. Catalyzes the hydrolytic cleavage of the carbon-nitrogen bond in imidazolone-5-propanoate to yield N-formimidoyl-L-glutamate. It is the third step in the universal histidine degradation pathway. The polypeptide is Imidazolonepropionase (Bacillus cytotoxicus (strain DSM 22905 / CIP 110041 / 391-98 / NVH 391-98)).